We begin with the raw amino-acid sequence, 503 residues long: UDP-N-acetylglucosamine--peptide N-acetylglucosaminyltransferase GtfA subunit (503 aa).

The segment at 1–78 (MTIYNINLGI…FTDIKIAPTS (78 aa)) is N-terminus R-fold-1. Position 16-19 (16-19 (GVEY)) interacts with UDP. Residues 79-195 (VTVDDVLAYF…VYHFKDKIFY (117 aa)) form an extended beta-sheet domain region. Residues 196–306 (GKQAFVRAFM…QPKIVTIPVG (111 aa)) are C-terminus R-fold-1. Histidine 242 provides a ligand contact to N-acetyl-D-glucosamine. The interval 307–503 (SIDSLTDSSQ…KKTVEEVLHD (197 aa)) is R-fold-2. Arginine 328 is a UDP binding site. Glutamate 332 serves as a coordination point for N-acetyl-D-glucosamine. UDP contacts are provided by residues lysine 333, glycine 358, and 384-385 (HA). 404 to 407 (EGFG) contacts N-acetyl-D-glucosamine. UDP is bound at residue 408 to 412 (LTLME).

The protein belongs to the glycosyltransferase group 1 family. Glycosyltransferase 4 subfamily. In terms of assembly, monomer. Interacts with stabilizing protein GtfB, probably as a heterotetramer with 2 subunits each of GtfA and GtfB, part of the accessory SecA2/SecY2 protein translocation apparatus.

It localises to the cytoplasm. The protein resides in the cell membrane. The enzyme catalyses L-seryl-[protein] + UDP-N-acetyl-alpha-D-glucosamine = 3-O-[N-acetyl-alpha-D-glucosaminyl]-L-seryl-[protein] + UDP + H(+). It participates in protein modification; protein glycosylation. Its function is as follows. Required for the polymorphic O-glycosylation of serine-rich repeat protein PsrP. Catalyzes the first step in glycosylation by transferring N-acetylglucosamine from UDP-GlcNAc to serine residues in PsrP. Part of the accessory SecA2/SecY2 system specifically required to export serine-rich repeat cell wall proteins encoded upstream in the same operon. The GtfA-GtfB complex adds GlcNAc from UDP-GlcNAc to PsrP (experimentally characterized with truncated PsrP-SSR1 constructs); this subunit alone has weak N-acetylglucosaminyl transferase activity that is 10-fold stimulated by GtfB. The complex requires at least a 25 residue-long peptide for activity; the in vitro assay has only been seen to glycosylate Ser residues. The alpha linkage was shown in L.reuteri. The protein is UDP-N-acetylglucosamine--peptide N-acetylglucosaminyltransferase GtfA subunit of Streptococcus pneumoniae serotype 4 (strain ATCC BAA-334 / TIGR4).